A 254-amino-acid chain; its full sequence is Uridylate kinase (254 aa).

Position 9-12 (9-12 (KLSG)) interacts with ATP. Glycine 51 contributes to the UMP binding site. ATP is bound by residues glycine 52 and arginine 56. Residues aspartate 72 and 133–140 (SGNPFFTT) each bind UMP. Residues threonine 160, tyrosine 166, and aspartate 169 each contribute to the ATP site.

Belongs to the UMP kinase family. Homohexamer.

It localises to the cytoplasm. It carries out the reaction UMP + ATP = UDP + ADP. It participates in pyrimidine metabolism; CTP biosynthesis via de novo pathway; UDP from UMP (UMPK route): step 1/1. With respect to regulation, inhibited by UTP. Functionally, catalyzes the reversible phosphorylation of UMP to UDP. This Synechococcus sp. (strain JA-3-3Ab) (Cyanobacteria bacterium Yellowstone A-Prime) protein is Uridylate kinase.